Consider the following 144-residue polypeptide: Large ribosomal subunit protein uL11 (144 aa).

It belongs to the universal ribosomal protein uL11 family. As to quaternary structure, part of the ribosomal stalk of the 50S ribosomal subunit. Interacts with L10 and the large rRNA to form the base of the stalk. L10 forms an elongated spine to which L12 dimers bind in a sequential fashion forming a multimeric L10(L12)X complex. In terms of processing, one or more lysine residues are methylated.

In terms of biological role, forms part of the ribosomal stalk which helps the ribosome interact with GTP-bound translation factors. The chain is Large ribosomal subunit protein uL11 from Rhodococcus opacus (strain B4).